The chain runs to 476 residues: Glycogen synthase (476 aa).

An ADP-alpha-D-glucose-binding site is contributed by Lys-15.

The protein belongs to the glycosyltransferase 1 family. Bacterial/plant glycogen synthase subfamily.

The catalysed reaction is [(1-&gt;4)-alpha-D-glucosyl](n) + ADP-alpha-D-glucose = [(1-&gt;4)-alpha-D-glucosyl](n+1) + ADP + H(+). The protein operates within glycan biosynthesis; glycogen biosynthesis. In terms of biological role, synthesizes alpha-1,4-glucan chains using ADP-glucose. This chain is Glycogen synthase, found in Streptococcus equi subsp. zooepidemicus (strain H70).